Here is a 170-residue protein sequence, read N- to C-terminus: Urease accessory protein UreE (170 aa).

Belongs to the UreE family.

It localises to the cytoplasm. Functionally, involved in urease metallocenter assembly. Binds nickel. Probably functions as a nickel donor during metallocenter assembly. This Helicobacter acinonychis (strain Sheeba) protein is Urease accessory protein UreE.